We begin with the raw amino-acid sequence, 225 residues long: MOB-like protein phocein (225 aa).

The Zn(2+) site is built by Cys-92, Cys-97, Cys-110, His-113, Cys-119, His-127, His-169, and His-174.

Belongs to the MOB1/phocein family. In terms of assembly, binds STRN4. Interacts with DNM1 and EPS15. Interacts with nucleoside diphosphate kinase. Interacts with CTTNBP2. Interacts with CTTNBP2NL. Part of the core of STRIPAK complexes composed of PP2A catalytic and scaffolding subunits, the striatins (PP2A regulatory subunits), the striatin-associated proteins MOB4, STRIP1 and STRIP2, PDCD10 and members of the STE20 kinases, such as STK24 and STK26. Phosphorylated on serine residues. Highly expressed in adrenal gland, spinal cord, brain and cerebellum. Detected at lower levels in heart and skeletal muscle, and at very low levels in spleen, liver and intestine.

The protein localises to the cytoplasm. Its subcellular location is the membrane. The protein resides in the golgi apparatus. It is found in the golgi stack membrane. Part of the striatin-interacting phosphatase and kinase (STRIPAK) complexes. STRIPAK complexes have critical roles in protein (de)phosphorylation and are regulators of multiple signaling pathways including Hippo, MAPK, nuclear receptor and cytoskeleton remodeling. Different types of STRIPAK complexes are involved in a variety of biological processes such as cell growth, differentiation, apoptosis, metabolism and immune regulation. The protein is MOB-like protein phocein (Mob4) of Rattus norvegicus (Rat).